We begin with the raw amino-acid sequence, 238 residues long: Probable metal transport system ATP-binding protein TP_0035 (238 aa).

One can recognise an ABC transporter domain in the interval 10–231 (VLLQNVSFRY…LDMQKKDALA (222 aa)). 44-51 (GENGSGKS) contributes to the ATP binding site.

This sequence belongs to the ABC transporter superfamily.

It localises to the cell inner membrane. Its function is as follows. Part of an ATP-driven transport system TP_0034/TP_0035/TP_0036 for a metal. Probably responsible for energy coupling to the transport system. The polypeptide is Probable metal transport system ATP-binding protein TP_0035 (Treponema pallidum (strain Nichols)).